Here is a 450-residue protein sequence, read N- to C-terminus: Bifunctional protein GlmU (450 aa).

The interval 1 to 229 (MGVALIVLAA…EAETLGINTR (229 aa)) is pyrophosphorylase. Residues 8–11 (LAAG), Lys22, Gln75, 80–81 (GT), 103–105 (YGD), Gly141, Glu155, Asn170, and Asn227 contribute to the UDP-N-acetyl-alpha-D-glucosamine site. Residue Asp105 coordinates Mg(2+). Asn227 contributes to the Mg(2+) binding site. The segment at 230 to 250 (TELAAAEQAFQARARARALED) is linker. Positions 251 to 450 (GVTLADPATT…RARKSAKGAQ (200 aa)) are N-acetyltransferase. UDP-N-acetyl-alpha-D-glucosamine-binding residues include Arg316 and Lys334. Residue His346 is the Proton acceptor of the active site. UDP-N-acetyl-alpha-D-glucosamine contacts are provided by Tyr349 and Asn360. Acetyl-CoA is bound by residues Ala363, 369–370 (NY), Ser388, Thr406, and Arg423.

In the N-terminal section; belongs to the N-acetylglucosamine-1-phosphate uridyltransferase family. The protein in the C-terminal section; belongs to the transferase hexapeptide repeat family. In terms of assembly, homotrimer. Mg(2+) serves as cofactor.

The protein localises to the cytoplasm. It catalyses the reaction alpha-D-glucosamine 1-phosphate + acetyl-CoA = N-acetyl-alpha-D-glucosamine 1-phosphate + CoA + H(+). The catalysed reaction is N-acetyl-alpha-D-glucosamine 1-phosphate + UTP + H(+) = UDP-N-acetyl-alpha-D-glucosamine + diphosphate. Its pathway is nucleotide-sugar biosynthesis; UDP-N-acetyl-alpha-D-glucosamine biosynthesis; N-acetyl-alpha-D-glucosamine 1-phosphate from alpha-D-glucosamine 6-phosphate (route II): step 2/2. It participates in nucleotide-sugar biosynthesis; UDP-N-acetyl-alpha-D-glucosamine biosynthesis; UDP-N-acetyl-alpha-D-glucosamine from N-acetyl-alpha-D-glucosamine 1-phosphate: step 1/1. The protein operates within bacterial outer membrane biogenesis; LPS lipid A biosynthesis. Its function is as follows. Catalyzes the last two sequential reactions in the de novo biosynthetic pathway for UDP-N-acetylglucosamine (UDP-GlcNAc). The C-terminal domain catalyzes the transfer of acetyl group from acetyl coenzyme A to glucosamine-1-phosphate (GlcN-1-P) to produce N-acetylglucosamine-1-phosphate (GlcNAc-1-P), which is converted into UDP-GlcNAc by the transfer of uridine 5-monophosphate (from uridine 5-triphosphate), a reaction catalyzed by the N-terminal domain. In Dinoroseobacter shibae (strain DSM 16493 / NCIMB 14021 / DFL 12), this protein is Bifunctional protein GlmU.